The sequence spans 353 residues: MSDFWIHLLVYLVILFGFVIVSVLIFIWLERRLIGRFQLRPGPNRAGPFGLLQPIADAIKVLIKEDIIPSEADKGVFWLAPLVAFVPVMLMFAAIPFADGVMLVDLNIGILYILAVSSVTVIGIFMAGWSSNNKYSLLGAMRTIAQEVSYEIPLVLSILGVVMLTGSLSMNEIVKAQDVPFILLQPLGFFVYLSAAMAEVNRTPFDLLEAESEIIAGFHTEYSGMKFGLFYLMEYAEVLAVSAIATTLFLGGWQGPLLHPVFWFIAKILLVFMFIIWVRATLPRLRIDQVMAFGWKFLLPLSLANLVITAFEILIAPDINTAVLIGINIAVMFGLVLLFSRFYKLGGGRVSIK.

9 helical membrane-spanning segments follow: residues 8-28 (LLVY…IFIW), 75-95 (GVFW…FAAI), 108-128 (IGIL…FMAG), 148-168 (VSYE…TGSL), 179-199 (VPFI…AMAE), 229-249 (LFYL…TTLF), 258-278 (LHPV…IIWV), 297-317 (FLLP…LIAP), and 319-339 (INTA…VLLF).

This sequence belongs to the complex I subunit 1 family. NDH-1 is composed of 14 different subunits. Subunits NuoA, H, J, K, L, M, N constitute the membrane sector of the complex.

The protein resides in the cell membrane. The enzyme catalyses a quinone + NADH + 5 H(+)(in) = a quinol + NAD(+) + 4 H(+)(out). Its function is as follows. NDH-1 shuttles electrons from NADH, via FMN and iron-sulfur (Fe-S) centers, to quinones in the respiratory chain. The immediate electron acceptor for the enzyme in this species is believed to be ubiquinone. Couples the redox reaction to proton translocation (for every two electrons transferred, four hydrogen ions are translocated across the cytoplasmic membrane), and thus conserves the redox energy in a proton gradient. This subunit may bind ubiquinone. The protein is NADH-quinone oxidoreductase subunit H of Dehalococcoides mccartyi (strain CBDB1).